We begin with the raw amino-acid sequence, 286 residues long: Aldo-keto reductase MAP_4149 (286 aa).

Tyrosine 61 (proton donor) is an active-site residue. Positions 201, 203, 239, 241, 242, 247, and 251 each coordinate NADPH.

It belongs to the aldo/keto reductase family.

This is Aldo-keto reductase MAP_4149 from Mycolicibacterium paratuberculosis (strain ATCC BAA-968 / K-10) (Mycobacterium paratuberculosis).